The chain runs to 281 residues: Ribosomal RNA small subunit methyltransferase A (281 aa).

S-adenosyl-L-methionine-binding residues include histidine 25, leucine 27, glycine 52, glutamate 74, aspartate 100, and asparagine 119.

Belongs to the class I-like SAM-binding methyltransferase superfamily. rRNA adenine N(6)-methyltransferase family. RsmA subfamily.

It localises to the cytoplasm. It carries out the reaction adenosine(1518)/adenosine(1519) in 16S rRNA + 4 S-adenosyl-L-methionine = N(6)-dimethyladenosine(1518)/N(6)-dimethyladenosine(1519) in 16S rRNA + 4 S-adenosyl-L-homocysteine + 4 H(+). Specifically dimethylates two adjacent adenosines (A1518 and A1519) in the loop of a conserved hairpin near the 3'-end of 16S rRNA in the 30S particle. May play a critical role in biogenesis of 30S subunits. This is Ribosomal RNA small subunit methyltransferase A from Paramagnetospirillum magneticum (strain ATCC 700264 / AMB-1) (Magnetospirillum magneticum).